A 469-amino-acid chain; its full sequence is Threonine synthase (469 aa).

Lys-112 bears the N6-(pyridoxal phosphate)lysine mark.

It belongs to the threonine synthase family. It depends on pyridoxal 5'-phosphate as a cofactor.

It catalyses the reaction O-phospho-L-homoserine + H2O = L-threonine + phosphate. Its pathway is amino-acid biosynthesis; L-threonine biosynthesis; L-threonine from L-aspartate: step 5/5. Functionally, catalyzes the gamma-elimination of phosphate from L-phosphohomoserine and the beta-addition of water to produce L-threonine. This Pseudomonas aeruginosa (strain ATCC 15692 / DSM 22644 / CIP 104116 / JCM 14847 / LMG 12228 / 1C / PRS 101 / PAO1) protein is Threonine synthase (thrC).